A 350-amino-acid chain; its full sequence is MADVSVLINGYGTIGKRVADAVDAQRDMEVLGVVKTSPDYLARLAVEEYGYPLFVPEDRVERFEDAGIETEGTVEDVVLNAEDYGLDVVVDCTPEGIGARNKETLYEKAGVKAIFQGGEEAEVAEVSFVAQCNYEEALGADYVRCVSCNTTALCRTLGTLKEEFELGRVYVTIVRRAADPHQVKKGPINAIAPNPVTVPSHHGPDVKTVMPDIDITTAAVKVPTTLMHMHVVRVELKEEVTSDDVIDAFEEARRIWVVPHGEGLGSTAELIELGRDLGRKRYDLYEILVWEESINVEDGVLYYMQAVHQEADVVPENVDAIRAMTELEEDPEASMDATDSALGVLNSPPL.

NAD(+) is bound by residues 13–14 (TI) and G118. A D-glyceraldehyde 3-phosphate-binding site is contributed by 147–149 (SCN). C148 serves as the catalytic Nucleophile. R176 is a binding site for NAD(+). 202–203 (HG) serves as a coordination point for D-glyceraldehyde 3-phosphate. Position 309 (Q309) interacts with NAD(+). The tract at residues 327–350 (LEEDPEASMDATDSALGVLNSPPL) is disordered.

It belongs to the glyceraldehyde-3-phosphate dehydrogenase family. In terms of assembly, homotetramer.

Its subcellular location is the cytoplasm. It carries out the reaction D-glyceraldehyde 3-phosphate + phosphate + NADP(+) = (2R)-3-phospho-glyceroyl phosphate + NADPH + H(+). The enzyme catalyses D-glyceraldehyde 3-phosphate + phosphate + NAD(+) = (2R)-3-phospho-glyceroyl phosphate + NADH + H(+). It participates in carbohydrate degradation; glycolysis; pyruvate from D-glyceraldehyde 3-phosphate: step 1/5. The polypeptide is Glyceraldehyde-3-phosphate dehydrogenase (Methanopyrus kandleri (strain AV19 / DSM 6324 / JCM 9639 / NBRC 100938)).